Here is a 331-residue protein sequence, read N- to C-terminus: Acyl-CoA desaturase 1 (331 aa).

Residues 1–46 are Cytoplasmic-facing; that stretch reads MTEVDDGCGGRLRGSVLLEDECDLKQECETPTHSLVQGRDPPVVVV. Residues 47-67 form a helical membrane-spanning segment; it reads WRNVVLMSVLHTAAVYGLVLL. N49 contacts substrate. Topologically, residues 68–71 are lumenal; it reads PSAS. Residues 72 to 90 traverse the membrane as a helical segment; that stretch reads AYTLLAFCFVSSALGITAG. Over 91 to 189 the chain is Cytoplasmic; it reads AHRLWSHRSY…DRVVMFQRRF (99 aa). The Fe cation site is built by H92 and H97. The Histidine box-1 motif lies at 92-97; the sequence is HRLWSH. Residues N120, R127, and D128 each coordinate substrate. Fe cation is bound by residues H129, H132, and H133. The Histidine box-2 signature appears at 129–133; the sequence is HRVHH. K161 serves as a coordination point for substrate. The chain crosses the membrane as a helical span at residues 190-209; the sequence is YKHSVVVMCFLIPAMLPWFL. The Lumenal segment spans residues 210 to 213; it reads WAES. Residues 214–235 traverse the membrane as a helical segment; that stretch reads LWVGYFVPVLLRYALVLNATWL. W234 serves as a coordination point for substrate. Topologically, residues 236–331 are cytoplasmic; sequence VNSAAHMWGN…RTGDGSHRSG (96 aa). 4 residues coordinate Fe cation: H241, H270, H273, and H274. The short motif at 270 to 274 is the Histidine box-3 element; the sequence is HNYHH.

It belongs to the fatty acid desaturase type 1 family. Fe(2+) is required as a cofactor. As to expression, expression is highest in liver, followed by brain and intestine, and lowest in spleen. Also expressed in heart, gill and muscle.

It is found in the endoplasmic reticulum membrane. The enzyme catalyses octadecanoyl-CoA + 2 Fe(II)-[cytochrome b5] + O2 + 2 H(+) = (9Z)-octadecenoyl-CoA + 2 Fe(III)-[cytochrome b5] + 2 H2O. In terms of biological role, stearoyl-CoA desaturase that utilizes O(2) and electrons from reduced cytochrome b5 to introduce the first double bond into saturated fatty acyl-CoA substrates. Catalyzes the insertion of a cis double bond at the delta-9 position into fatty acyl-CoA substrates including palmitoyl-CoA and stearoyl-CoA. Contributes to the biosynthesis of membrane phospholipids, cholesterol esters and triglycerides. This is Acyl-CoA desaturase 1 from Tachysurus fulvidraco (Yellow catfish).